Consider the following 355-residue polypeptide: S-adenosylmethionine:tRNA ribosyltransferase-isomerase (355 aa).

The protein belongs to the QueA family. In terms of assembly, monomer.

Its subcellular location is the cytoplasm. The catalysed reaction is 7-aminomethyl-7-carbaguanosine(34) in tRNA + S-adenosyl-L-methionine = epoxyqueuosine(34) in tRNA + adenine + L-methionine + 2 H(+). Its pathway is tRNA modification; tRNA-queuosine biosynthesis. Transfers and isomerizes the ribose moiety from AdoMet to the 7-aminomethyl group of 7-deazaguanine (preQ1-tRNA) to give epoxyqueuosine (oQ-tRNA). The chain is S-adenosylmethionine:tRNA ribosyltransferase-isomerase from Jannaschia sp. (strain CCS1).